The sequence spans 202 residues: Ras-related protein Rab-1A (202 aa).

GTP contacts are provided by residues 15–23, 33–40, 63–67, 121–124, and 151–153; these read GDSGVGKSC, YSESFIST, DTAGQ, NKSD, and SAK. Positions 37–45 match the Effector region motif; it reads FISTIGVDF. The interval 180 to 202 is disordered; sequence QTVDKNKVVPGSSAPISPKSGCC. S-geranylgeranyl cysteine attachment occurs at residues cysteine 201 and cysteine 202.

Belongs to the small GTPase superfamily. Rab family.

It localises to the cell membrane. This Dictyostelium discoideum (Social amoeba) protein is Ras-related protein Rab-1A (rab1A).